Consider the following 1040-residue polypeptide: Multidrug resistance protein MdtB (1040 aa).

Transmembrane regions (helical) follow at residues 16–36 (FIMR…AGII), 347–367 (LMMA…NIPA), 369–389 (IIPG…MVFL), 396–416 (LTLM…IVVI), 440–460 (IGFT…PLLF), 472–492 (FAIT…TLTP), 537–557 (WLTL…WVFI), 863–883 (LGST…VLGI), 888–908 (FIHP…ALLA), 911–931 (IAGS…IGIV), 968–988 (ILMT…STGV), and 998–1018 (IGMV…TPVI).

This sequence belongs to the resistance-nodulation-cell division (RND) (TC 2.A.6) family. MdtB subfamily. Part of a tripartite efflux system composed of MdtA, MdtB and MdtC. MdtB forms a heteromultimer with MdtC.

Its subcellular location is the cell inner membrane. The MdtABC tripartite complex confers resistance against novobiocin and deoxycholate. This Escherichia coli O17:K52:H18 (strain UMN026 / ExPEC) protein is Multidrug resistance protein MdtB.